A 1151-amino-acid chain; its full sequence is SCF E3 ubiquitin ligase complex F-box protein GRR1 (1151 aa).

The span at 1-18 (MDQDNNNHNDSNRLHPPD) shows a compositional bias: basic and acidic residues. The segment at 1–72 (MDQDNNNHND…ATSERNASEV (72 aa)) is disordered. The span at 38–49 (NNNNNNNNNNNN) shows a compositional bias: low complexity. The segment covering 58-72 (RTRETATSERNASEV) has biased composition (basic and acidic residues). 2 positions are modified to phosphoserine: S199 and S300. An F-box domain is found at 314–361 (VFALNMLPSEILHLILDKLNQKYDIVKFLTVSKLWAEIIVKILYYRPH). 13 LRR repeats span residues 399–423 (GDYM…TLVF), 424–449 (CKHI…DITG), 450–475 (IRDV…YVPQ), 476–501 (ARNV…KITA), 502–527 (NNNM…DITL), 528–553 (SPNV…RITH), 554–582 (NTNI…DLSG), 583–608 (CENI…FLGK), 609–634 (CSRI…HFGH), 635–660 (CFNI…DFAC), 661–685 (CTNL…GLVK), 686–714 (CTQM…HLSY), and 715–740 (CSNL…SLTA). Over residues 1066-1080 (AGANDTSNNETNNGN) the composition is skewed to low complexity. 2 disordered regions span residues 1066–1090 (AGAN…NPNF) and 1118–1151 (VRNN…EDML).

As to quaternary structure, interacts with SKP1. Component of the probable SCF(GRR1) complex containing CDC53, SKP1, RBX1 and GRR1.

The protein localises to the membrane. It participates in protein modification; protein ubiquitination. Its function is as follows. Substrate recognition component of a SCF (SKP1-CUL1-F-box protein) E3 ubiquitin-protein ligase complex which mediates the ubiquitination and subsequent proteasomal degradation of target proteins. Recognizes and directs ubiquitination of phosphorylated CLN1, CLN2 and GIC2. Probably constitutes the primary response element required for the generation or interpretation of the signal that induces glucose repression. The chain is SCF E3 ubiquitin ligase complex F-box protein GRR1 (GRR1) from Saccharomyces cerevisiae (strain ATCC 204508 / S288c) (Baker's yeast).